The primary structure comprises 432 residues: Diaminopimelate decarboxylase (432 aa).

N6-(pyridoxal phosphate)lysine is present on K66. Residues G248 and 290–293 (EPGR) contribute to the pyridoxal 5'-phosphate site. Substrate contacts are provided by R293, R330, and Y334. C361 acts as the Proton donor in catalysis. E362 and Y390 together coordinate substrate. Y390 contacts pyridoxal 5'-phosphate.

This sequence belongs to the Orn/Lys/Arg decarboxylase class-II family. LysA subfamily. As to quaternary structure, homodimer. Requires pyridoxal 5'-phosphate as cofactor.

It carries out the reaction meso-2,6-diaminopimelate + H(+) = L-lysine + CO2. The protein operates within amino-acid biosynthesis; L-lysine biosynthesis via DAP pathway; L-lysine from DL-2,6-diaminopimelate: step 1/1. Its function is as follows. Specifically catalyzes the decarboxylation of meso-diaminopimelate (meso-DAP) to L-lysine. In Bacillus methanolicus, this protein is Diaminopimelate decarboxylase.